The following is a 136-amino-acid chain: Ribosome-binding factor A (136 aa).

The tract at residues 1 to 22 (MNTAGPAGKLAGHAASGPTQRQ) is disordered.

The protein belongs to the RbfA family. As to quaternary structure, monomer. Binds 30S ribosomal subunits, but not 50S ribosomal subunits or 70S ribosomes.

Its subcellular location is the cytoplasm. One of several proteins that assist in the late maturation steps of the functional core of the 30S ribosomal subunit. Associates with free 30S ribosomal subunits (but not with 30S subunits that are part of 70S ribosomes or polysomes). Required for efficient processing of 16S rRNA. May interact with the 5'-terminal helix region of 16S rRNA. The polypeptide is Ribosome-binding factor A (Gluconacetobacter diazotrophicus (strain ATCC 49037 / DSM 5601 / CCUG 37298 / CIP 103539 / LMG 7603 / PAl5)).